The following is a 408-amino-acid chain: Probable medium-chain specific acyl-CoA dehydrogenase 2, mitochondrial (408 aa).

The transit peptide at 1–5 (MLSRL) directs the protein to the mitochondrion. Residues 143–152 (YCVTEPGAGS) and 176–178 (WIT) contribute to the FAD site. Ser-152 serves as a coordination point for substrate. 263–266 (DMTR) contributes to the substrate binding site. Residues 291-293 (RKA), 301-302 (HQ), and 355-359 (MLFRC) each bind FAD. Residue Glu-382 is the Proton acceptor of the active site. Gly-383 lines the substrate pocket. 384-386 (TSQ) contributes to the FAD binding site. Arg-394 is a binding site for substrate.

It belongs to the acyl-CoA dehydrogenase family. As to quaternary structure, homotetramer. Requires FAD as cofactor.

It is found in the mitochondrion matrix. The enzyme catalyses a medium-chain 2,3-saturated fatty acyl-CoA + oxidized [electron-transfer flavoprotein] + H(+) = a medium-chain (2E)-enoyl-CoA + reduced [electron-transfer flavoprotein]. The protein operates within lipid metabolism; mitochondrial fatty acid beta-oxidation. In terms of biological role, this enzyme is specific for acyl chain lengths of 4 to 16. The protein is Probable medium-chain specific acyl-CoA dehydrogenase 2, mitochondrial of Caenorhabditis briggsae.